The chain runs to 265 residues: Type III pantothenate kinase (265 aa).

D6–V13 contributes to the ATP binding site. Position 112 to 115 (G112 to R115) interacts with substrate. The active-site Proton acceptor is D114. Residue D134 coordinates K(+). T137 contributes to the ATP binding site. T189 is a binding site for substrate.

This sequence belongs to the type III pantothenate kinase family. In terms of assembly, homodimer. It depends on NH4(+) as a cofactor. K(+) is required as a cofactor.

It is found in the cytoplasm. The catalysed reaction is (R)-pantothenate + ATP = (R)-4'-phosphopantothenate + ADP + H(+). Its pathway is cofactor biosynthesis; coenzyme A biosynthesis; CoA from (R)-pantothenate: step 1/5. Catalyzes the phosphorylation of pantothenate (Pan), the first step in CoA biosynthesis. This is Type III pantothenate kinase from Streptomyces coelicolor (strain ATCC BAA-471 / A3(2) / M145).